Here is a 283-residue protein sequence, read N- to C-terminus: Pantothenate synthetase (283 aa).

Position 30–37 (30–37) interacts with ATP; sequence MGYLHEGH. Residue His-37 is the Proton donor of the active site. Residue Gln-61 coordinates (R)-pantoate. Gln-61 serves as a coordination point for beta-alanine. 147-150 provides a ligand contact to ATP; sequence GRKD. Residue Gln-153 coordinates (R)-pantoate. Residues Val-176 and 184-187 each bind ATP; that span reads MSSR.

Belongs to the pantothenate synthetase family. In terms of assembly, homodimer.

It is found in the cytoplasm. It catalyses the reaction (R)-pantoate + beta-alanine + ATP = (R)-pantothenate + AMP + diphosphate + H(+). Its pathway is cofactor biosynthesis; (R)-pantothenate biosynthesis; (R)-pantothenate from (R)-pantoate and beta-alanine: step 1/1. Catalyzes the condensation of pantoate with beta-alanine in an ATP-dependent reaction via a pantoyl-adenylate intermediate. The chain is Pantothenate synthetase from Syntrophotalea carbinolica (strain DSM 2380 / NBRC 103641 / GraBd1) (Pelobacter carbinolicus).